We begin with the raw amino-acid sequence, 316 residues long: Methionyl-tRNA formyltransferase (316 aa).

108–111 contacts (6S)-5,6,7,8-tetrahydrofolate; that stretch reads SLLP.

It belongs to the Fmt family.

It carries out the reaction L-methionyl-tRNA(fMet) + (6R)-10-formyltetrahydrofolate = N-formyl-L-methionyl-tRNA(fMet) + (6S)-5,6,7,8-tetrahydrofolate + H(+). Its function is as follows. Attaches a formyl group to the free amino group of methionyl-tRNA(fMet). The formyl group appears to play a dual role in the initiator identity of N-formylmethionyl-tRNA by promoting its recognition by IF2 and preventing the misappropriation of this tRNA by the elongation apparatus. In Heliobacterium modesticaldum (strain ATCC 51547 / Ice1), this protein is Methionyl-tRNA formyltransferase.